A 251-amino-acid polypeptide reads, in one-letter code: uncharacterized protein (251 aa).

36-43 (GKQGTGKT) serves as a coordination point for ATP. The disordered stretch occupies residues 230–251 (SDNKTENPSNPSLLTKIDDVTR).

Functionally, this protein may be involved in virus assembly. Essential for virus function. This is an uncharacterized protein from Sulfolobus spindle-shape virus 1 (SSV1).